The sequence spans 207 residues: Protein lin-7 homolog B (207 aa).

Residues 1–13 (MAALVEPLGLERD) carry the Kinase interacting site motif. The L27 domain maps to 10 to 65 (LERDVSRAVELLERLQRSGELPPQKLQALQRVLQSRFCSAIREVYEQLYDTLDITG). A PDZ domain is found at 93-175 (VVELPKTDEG…SVKLVVRYTP (83 aa)). A disordered region spans residues 187–207 (KMRSARRRQQHHSYTSLESRG). Residues 198-207 (HSYTSLESRG) are compositionally biased toward polar residues.

Belongs to the lin-7 family. In terms of assembly, forms a complex with CASK and CASKIN1. Component of the brain-specific heterotrimeric complex (LIN-10-LIN-2-LIN-7 complex) composed of at least APBA1, CASK, and LIN7, which associates with the motor protein KIF17 to transport vesicles along microtubules. Forms a heterotrimeric complex composed of MMP5, LIN7B and PATJ; the N-terminal L27 domain of PALS1 interacts with the L27 domain of PATJ and the C-terminal L27 domain of PALS1 interacts with the L27 domain of LIN7B. Forms a heterotrimeric complex with DLG1 and CASK via their L27 domains. Interacts with DLG4 and GRIN2B as well as CDH1 and CTNNB1, the channels KCNJ12/Kir2.2, KCNJ4/Kir2.3 and probably KCNJ2/Kir2.1 and SLC6A12/BGT-1 via its PDZ domain. The association of LIN7A with cadherin and beta-catenin is calcium-dependent, occurs at synaptic junctions and requires the actin cytoskeleton. Interacts with EGFR, ERBB2, ERBB3 and ERBB4 with both PDZ and KID domains. Associates with KIF17 via APBA1. Interacts with ASIC3. Interacts with TOPK. Interacts with RTKN. Interacts with APBA1. Interacts with MPP7. Interacts with DLG2. Interacts with DLG3. In terms of tissue distribution, expressed in the kidney; predominantly in the vasa recta.

Its subcellular location is the cell membrane. The protein localises to the basolateral cell membrane. It is found in the cell junction. It localises to the postsynaptic density membrane. The protein resides in the tight junction. Its function is as follows. Plays a role in establishing and maintaining the asymmetric distribution of channels and receptors at the plasma membrane of polarized cells. Forms membrane-associated multiprotein complexes that may regulate delivery and recycling of proteins to the correct membrane domains. The tripartite complex composed of LIN7 (LIN7A, LIN7B or LIN7C), CASK and APBA1 associates with the motor protein KIF17 to transport vesicles containing N-methyl-D-aspartate (NMDA) receptor subunit NR2B along microtubules. This complex may have the potential to couple synaptic vesicle exocytosis to cell adhesion in brain. Ensures the proper localization of GRIN2B (subunit 2B of the NMDA receptor) to neuronal postsynaptic density and may function in localizing synaptic vesicles at synapses where it is recruited by beta-catenin and cadherin. Required to localize Kir2 channels, GABA transporter (SLC6A12) and EGFR/ERBB1, ERBB2, ERBB3 and ERBB4 to the basolateral membrane of epithelial cells. May increase the amplitude of ASIC3 acid-evoked currents by stabilizing the channel at the cell surface. This chain is Protein lin-7 homolog B (Lin7b), found in Mus musculus (Mouse).